The following is a 501-amino-acid chain: Cytochrome P450 71B3 (501 aa).

The helical transmembrane segment at 2-22 (SILLYFFFLPVILSLIFMKKF) threads the bilayer. Cys-445 is a heme binding site.

This sequence belongs to the cytochrome P450 family. It depends on heme as a cofactor.

The protein resides in the membrane. The protein is Cytochrome P450 71B3 (CYP71B3) of Arabidopsis thaliana (Mouse-ear cress).